Reading from the N-terminus, the 312-residue chain is Olfactory receptor 2T10 (312 aa).

The Extracellular portion of the chain corresponds to 1–25 (MRLANQTLGGDFFLLGIFSQISHPG). N-linked (GlcNAc...) asparagine glycosylation is present at Asn5. A helical transmembrane segment spans residues 26–49 (RLCLLIFSIFLMAVSWNITLILLI). At 50 to 57 (HIDSSLHT) the chain is on the cytoplasmic side. The helical transmembrane segment at 58–79 (PMYFFINQLSLIDLTYISVTVP) threads the bilayer. Over 80–100 (KMLVNQLAKDKTISVLGCGTQ) the chain is Extracellular. Cys97 and Cys189 are joined by a disulfide. Residues 101–120 (MYFYLQLGGAECCLLAAMAY) form a helical membrane-spanning segment. The Cytoplasmic portion of the chain corresponds to 121 to 139 (DRYVAICHPLRYSVLMSHR). The chain crosses the membrane as a helical span at residues 140–158 (VCLLLASGCWFVGSVDGFM). Residues 159-195 (LTPIAMSFPFCRSHEIQHFFCEVPAVLKLSCSDTSLY) are Extracellular-facing. The chain crosses the membrane as a helical span at residues 196–219 (KIFMYLCCVIMLLIPVTVISVSYY). Topologically, residues 220–236 (YIILTIHKMNSVEGRKK) are cytoplasmic. A helical transmembrane segment spans residues 237–259 (AFTTCSSHITVVSLFYGAAIYNY). Residues 260 to 272 (MLPSSYQTPEKDM) lie on the Extracellular side of the membrane. The helical transmembrane segment at 273-292 (MSSFFYTILTPVLNPIIYSF) threads the bilayer. Residues 293-312 (RNKDVTRALKKMLSVQKPPY) lie on the Cytoplasmic side of the membrane.

The protein belongs to the G-protein coupled receptor 1 family.

It is found in the cell membrane. Odorant receptor. The sequence is that of Olfactory receptor 2T10 (OR2T10) from Homo sapiens (Human).